The following is an 84-amino-acid chain: Large ribosomal subunit protein bL31B-2 (84 aa).

It belongs to the bacterial ribosomal protein bL31 family. Type B subfamily. In terms of assembly, part of the 50S ribosomal subunit.

This chain is Large ribosomal subunit protein bL31B-2, found in Streptomyces coelicolor (strain ATCC BAA-471 / A3(2) / M145).